A 328-amino-acid chain; its full sequence is Serine protease 27 (328 aa).

An N-terminal signal peptide occupies residues 1–22 (MRQPHITALLLLPLLLRSGTEG). Residues 23–37 (AEAMRACGHPRMFNR) constitute a propeptide, activation peptide. The region spanning 38 to 280 (MVGGEDALEG…HYQWIHQIIP (243 aa)) is the Peptidase S1 domain. Cysteine 63 and cysteine 79 are disulfide-bonded. Histidine 78 functions as the Charge relay system in the catalytic mechanism. N-linked (GlcNAc...) asparagine glycosylation occurs at asparagine 82. Aspartate 127 acts as the Charge relay system in catalysis. Intrachain disulfides connect cysteine 161–cysteine 238, cysteine 194–cysteine 217, and cysteine 228–cysteine 256. Serine 232 acts as the Charge relay system in catalysis.

It belongs to the peptidase S1 family.

The protein resides in the secreted. In Rattus norvegicus (Rat), this protein is Serine protease 27 (Prss27).